A 188-amino-acid polypeptide reads, in one-letter code: Viral FLICE protein (188 aa).

DED domains lie at Ala-2 to His-74 and Pro-93 to Thr-169.

In terms of assembly, interacts with host RIPK1, TRAF2, MAP3K14, IKBKB, and IKBKG. Interacts with host CADM1; this interaction is essential for chronic NF-kappa-B activation.

In terms of biological role, plays a role in the modulation of host signaling pathways by acting as an activator of both the classic and the alternative NF-kappa-B pathways. Thereby, initiates an important range of cellular processes to promote cell survival, proliferation and protection from apoptosis. The protein is Viral FLICE protein (ORF71) of Human herpesvirus 8 type P (isolate GK18) (HHV-8).